Here is a 441-residue protein sequence, read N- to C-terminus: Serine--tRNA ligase (441 aa).

250–252 (TSE) lines the L-serine pocket. ATP is bound by residues 281–283 (RRE) and V297. E304 contributes to the L-serine binding site. ATP is bound at residue 368–371 (EIVS). T402 provides a ligand contact to L-serine.

Belongs to the class-II aminoacyl-tRNA synthetase family. Type-1 seryl-tRNA synthetase subfamily. As to quaternary structure, homodimer. The tRNA molecule binds across the dimer.

The protein resides in the cytoplasm. It catalyses the reaction tRNA(Ser) + L-serine + ATP = L-seryl-tRNA(Ser) + AMP + diphosphate + H(+). It carries out the reaction tRNA(Sec) + L-serine + ATP = L-seryl-tRNA(Sec) + AMP + diphosphate + H(+). It functions in the pathway aminoacyl-tRNA biosynthesis; selenocysteinyl-tRNA(Sec) biosynthesis; L-seryl-tRNA(Sec) from L-serine and tRNA(Sec): step 1/1. Catalyzes the attachment of serine to tRNA(Ser). Is also able to aminoacylate tRNA(Sec) with serine, to form the misacylated tRNA L-seryl-tRNA(Sec), which will be further converted into selenocysteinyl-tRNA(Sec). The sequence is that of Serine--tRNA ligase from Thermoplasma acidophilum (strain ATCC 25905 / DSM 1728 / JCM 9062 / NBRC 15155 / AMRC-C165).